Reading from the N-terminus, the 451-residue chain is Alpha-galactosidase (451 aa).

5-71 (PKITFIGAGS…ASGRITCHTN (67 aa)) is an NAD(+) binding site. Asparagine 151 serves as a coordination point for substrate. Cysteine 173 contacts Mn(2+). Residue histidine 174 is the Proton donor of the active site. Histidine 203 provides a ligand contact to Mn(2+). Arginine 287 lines the substrate pocket.

The protein belongs to the glycosyl hydrolase 4 family. As to quaternary structure, homodimer. Mn(2+) is required as a cofactor. NAD(+) serves as cofactor.

It carries out the reaction Hydrolysis of terminal, non-reducing alpha-D-galactose residues in alpha-D-galactosides, including galactose oligosaccharides, galactomannans and galactolipids.. The chain is Alpha-galactosidase (melA) from Salmonella typhimurium (strain LT2 / SGSC1412 / ATCC 700720).